Consider the following 268-residue polypeptide: MSDRREQFQYAFLDSGIGGLPYAHALRVRVPEASLVYVADRVYFPYGNKSSAQIIARASAVLQKVQTNFSPHIVVLACNSMSVNALEFLRAQVSVPVVGVVPAIKQAVACSHKKHIGVLATQCTITHPYTACLRAQFGAGCVFQMRADARLIECLERGLIFEVEDMQREAVARSVMPFQEAGVDVLVLACTHFVHVRHLFQDCVGTSCTVVDSLEGVVRRTLRLCPPQSQLRGNAACYVTGARDAVCAARYARYAQHFGLRWAGFLDV.

Substrate-binding positions include 14 to 15 and 46 to 47; these read DS and YG. Cys-78 functions as the Proton donor/acceptor in the catalytic mechanism. Position 79–80 (79–80) interacts with substrate; sequence NS. Cys-190 serves as the catalytic Proton donor/acceptor. 191–192 contacts substrate; it reads TH.

Belongs to the aspartate/glutamate racemases family.

The enzyme catalyses L-glutamate = D-glutamate. It participates in cell wall biogenesis; peptidoglycan biosynthesis. In terms of biological role, provides the (R)-glutamate required for cell wall biosynthesis. This Treponema pallidum (strain Nichols) protein is Glutamate racemase.